The primary structure comprises 329 residues: NADH-quinone oxidoreductase subunit H (329 aa).

9 helical membrane-spanning segments follow: residues 9 to 29 (LIKI…ATYI), 42 to 62 (GPCY…IKLF), 75 to 95 (FIFT…MAPI), 117 to 137 (IGFL…ILAG), 154 to 174 (IQLL…LMVV), 188 to 208 (GGFL…FLIA), 238 to 258 (LKWG…SFVI), 269 to 291 (WGFI…LSMW), and 309 to 329 (WKIM…IILI).

This sequence belongs to the complex I subunit 1 family. In terms of assembly, NDH-1 is composed of 14 different subunits. Subunits NuoA, H, J, K, L, M, N constitute the membrane sector of the complex.

It localises to the cell inner membrane. The catalysed reaction is a quinone + NADH + 5 H(+)(in) = a quinol + NAD(+) + 4 H(+)(out). NDH-1 shuttles electrons from NADH, via FMN and iron-sulfur (Fe-S) centers, to quinones in the respiratory chain. The immediate electron acceptor for the enzyme in this species is believed to be ubiquinone. Couples the redox reaction to proton translocation (for every two electrons transferred, four hydrogen ions are translocated across the cytoplasmic membrane), and thus conserves the redox energy in a proton gradient. This subunit may bind ubiquinone. This is NADH-quinone oxidoreductase subunit H from Helicobacter pylori (strain P12).